The chain runs to 217 residues: E3 ubiquitin-protein ligase znrf2 (217 aa).

Disordered stretches follow at residues 1 to 27 and 63 to 111; these read MGAK…SATA and QFIS…ERST. A lipid anchor (N-myristoyl glycine) is attached at G2. Over residues 68–100 the composition is skewed to polar residues; that stretch reads RTRSVGPSARPQSGINIPNSGAYSSADSGNSTP. The RING-type; atypical zinc-finger motif lies at 174-215; that stretch reads CAICLEELLQGDTIARLPCLCIYHKGCIDEWFEVNRSCPEHP.

It is found in the endosome membrane. Its subcellular location is the lysosome membrane. It localises to the presynaptic cell membrane. The enzyme catalyses S-ubiquitinyl-[E2 ubiquitin-conjugating enzyme]-L-cysteine + [acceptor protein]-L-lysine = [E2 ubiquitin-conjugating enzyme]-L-cysteine + N(6)-ubiquitinyl-[acceptor protein]-L-lysine.. It participates in protein modification; protein ubiquitination. Its function is as follows. May play a role in the establishment and maintenance of neuronal transmission and plasticity via its ubiquitin ligase activity. E3 ubiquitin ligases accept ubiquitin from an E2 ubiquitin-conjugating enzyme in the form of a thioester and then directly transfer the ubiquitin to targeted substrates. The chain is E3 ubiquitin-protein ligase znrf2 (znrf2) from Danio rerio (Zebrafish).